A 524-amino-acid polypeptide reads, in one-letter code: Unconventional prefoldin RPB5 interactor (524 aa).

Disordered regions lie at residues 1–20 (MEAP…LRAP), 284–320 (SVNG…EDNS), and 335–373 (VRIN…ELPM). The segment covering 296 to 307 (DDGDNNDDGGDS) has biased composition (acidic residues). Ser-361 carries the post-translational modification Phosphoserine; by RPS6KB1. A Phosphoserine modification is found at Ser-431.

Belongs to the RNA polymerase II subunit 5-mediating protein family. Homodimer. Component of the PAQosome complex which is responsible for the biogenesis of several protein complexes and which consists of R2TP complex members RUVBL1, RUVBL2, RPAP3 and PIH1D1, URI complex members PFDN2, PFDN6, PDRG1, UXT and URI1 as well as ASDURF, POLR2E and DNAAF10/WDR92. Interacts with POLR2E/RPB5, RUVBL2 and RUVBL1. Interacts with PFDN2, PFDN4 and STAP1; the interactions are phosphorylation-dependent and occur in a growth-dependent manner in the mitochondrion. Interacts with UXT. Interacts with PPP1CC; the interaction is phosphorylation-dependent and occurs in a growth factor-dependent manner. Interacts (via the middle C-terminal region) with GTF2F1 and GTF2F2. Interacts with DMAP1. Interacts with TSC1 and TSC2. Interacts with PRPF8 and EFTUD2 in a ZNHIT2-dependent manner. Phosphorylated. Phosphorylation occurs essentially on serine residues. Phosphorylation occurs in response to androgen treatment in prostate cancer cells in a mTOR-dependent manner. Phosphorylated; hyperhosphorylated in mitochondria in a mTORC-dependent signaling pathway. Phosphorylated at Ser-361 by RPS6KB1 in a growth factor- and rapamycin-dependent manner. S6K1-mediated mitochondrial phosphorylation at Ser-361 disrupts the URI1-PPP1CC complex in the mitochondrion, relieves PPP1CC phosphatase inhibition activity and hence engages a negative feedback diminishing RPS6KB1 kinase activity, preventing sustained S6K1-dependent signaling.

It localises to the nucleus. Its subcellular location is the cytoplasm. The protein localises to the mitochondrion. The protein resides in the cell projection. It is found in the dendrite. In terms of biological role, involved in gene transcription regulation. Acts as a transcriptional repressor in concert with the corepressor UXT to regulate androgen receptor (AR) transcription. May act as a tumor suppressor to repress AR-mediated gene transcription and to inhibit anchorage-independent growth in prostate cancer cells. Required for cell survival in ovarian cancer cells. Together with UXT, associates with chromatin to the NKX3-1 promoter region. Functionally, plays a central role in maintaining S6K1 signaling and BAD phosphorylation under normal growth conditions thereby protecting cells from potential deleterious effects of sustained S6K1 signaling. The URI1-PPP1CC complex acts as a central component of a negative feedback mechanism that counteracts excessive S6K1 survival signaling to BAD in response to growth factors. Mediates inhibition of PPP1CC phosphatase activity in mitochondria. Coordinates the regulation of nutrient-sensitive gene expression availability in a mTOR-dependent manner. Seems to be a scaffolding protein able to assemble a prefoldin-like complex that contains PFDs and proteins with roles in transcription and ubiquitination. In Bos taurus (Bovine), this protein is Unconventional prefoldin RPB5 interactor (URI1).